The sequence spans 459 residues: Argininosuccinate lyase (459 aa).

The segment at 440–459 (DEKKLEELRQNENRDNVYNP) is disordered.

It belongs to the lyase 1 family. Argininosuccinate lyase subfamily.

It localises to the cytoplasm. It catalyses the reaction 2-(N(omega)-L-arginino)succinate = fumarate + L-arginine. It participates in amino-acid biosynthesis; L-arginine biosynthesis; L-arginine from L-ornithine and carbamoyl phosphate: step 3/3. This Pyrococcus furiosus (strain ATCC 43587 / DSM 3638 / JCM 8422 / Vc1) protein is Argininosuccinate lyase.